We begin with the raw amino-acid sequence, 173 residues long: Ribosomal RNA large subunit methyltransferase H (173 aa).

Residues Leu-89 and Gly-121 each coordinate S-adenosyl-L-methionine.

Belongs to the RNA methyltransferase RlmH family. In terms of assembly, homodimer.

It localises to the cytoplasm. It carries out the reaction pseudouridine(1915) in 23S rRNA + S-adenosyl-L-methionine = N(3)-methylpseudouridine(1915) in 23S rRNA + S-adenosyl-L-homocysteine + H(+). Functionally, specifically methylates the pseudouridine at position 1915 (m3Psi1915) in 23S rRNA. The polypeptide is Ribosomal RNA large subunit methyltransferase H (Chelativorans sp. (strain BNC1)).